A 798-amino-acid polypeptide reads, in one-letter code: MNRFLEFSNNFLEVAGNTINNISSKSITDNVGNVWGNITGGRVGQVYDINGRRVTEVKLVAEGGFGFVYLVRDDYNNMYALKRMFIQERERLEAMKNEIDVMQKLRNNPNIVKLEGFKINENRNTRETEVLMLMEYCSGGSVLDIMNARGEFTRLEEREILAIFSDVCNGVLAMHQQQPPIAHRDLKIENVLYCEHSNRYKLCDFGSSTIKTFNTATERGKAEDDINMFTTLFYRAPEMVDLYRGQIIDEKVDVWALGCLLFKMAFYVDPFDGGSLQIINNNYKIPDNSKYSNNFHKLIQFILVADPTQRPSINDLLNYLNEIRGSSRRGLQTFSSNNNNSNNNSNNNSNNNSNNNSVNNSSNSINRPIRTSSSSNSTPNFNSPNTNNNNYNNNNNNSKNYGNTPNSTPPNAKKNIFDILGDDTTSSTSNSNNSPSVSRNNINNNSNNFNNNNNNNNNNNNNNNNNNNNNNNNNTNNNNSNNNNYNNNNNKFDEFESWGNTPLQHPSPSNSNSNVIINNTNSSGKNNQNKSNSGNGNFFDNDFEFEGFVSPTTNGSTNFEVNTTNTNVSLNSSTHSSSSFNNSSNNNNTNNSSVSVGSSINNSGTRLMNNSSGSLPQSRQSSFNSTPQQQQQQFNSSTNSGSYNNLTSSFNNLNISTSSSASISSSGGVSNNSDNSWNVTLTPSQSNKNSTGNLKPLNNNNNNNNNNNNRFANNTNSSRDYSFDFSSPNTSNNNDFGSFVQPSSSSSLNTTHFSKPNYNVNLNQTTSMTNNYNNNNYNNNNNSNNNNNNSKVFDFGIL.

Positions 54–324 (VTEVKLVAEG…DLLNYLNEIR (271 aa)) constitute a Protein kinase domain. ATP is bound by residues 60-68 (VAEGGFGFV) and Lys82. The active-site Proton acceptor is the Asp185. Disordered stretches follow at residues 330 to 538 (GLQT…NGNF), 553 to 645 (TNGS…SYNN), and 659 to 798 (SSAS…FGIL). 6 stretches are compositionally biased toward low complexity: residues 335-406 (SSNN…NTPN), 429-490 (SNSN…NNNN), 506-538 (PSPSNSNSNVIINNTNSSGKNNQNKSNSGNGNF), 557-603 (TNFE…INNS), 611-642 (SSGSLPQSRQSSFNSTPQQQQQQFNSSTNSGS), and 659-678 (SSASISSSGGVSNNSDNSWN). A compositionally biased stretch (polar residues) spans 679-697 (VTLTPSQSNKNSTGNLKPL). Residues 698-716 (NNNNNNNNNNNNRFANNTN) are compositionally biased toward low complexity. Positions 717–769 (SSRDYSFDFSSPNTSNNNDFGSFVQPSSSSSLNTTHFSKPNYNVNLNQTTSMT) are enriched in polar residues. A compositionally biased stretch (low complexity) spans 770–790 (NNYNNNNYNNNNNSNNNNNNS).

The protein belongs to the protein kinase superfamily. Ser/Thr protein kinase family.

The catalysed reaction is L-seryl-[protein] + ATP = O-phospho-L-seryl-[protein] + ADP + H(+). The enzyme catalyses L-threonyl-[protein] + ATP = O-phospho-L-threonyl-[protein] + ADP + H(+). In Dictyostelium discoideum (Social amoeba), this protein is Probable serine/threonine-protein kinase DDB_G0276461.